The sequence spans 230 residues: Flavin-dependent thymidylate synthase (230 aa).

The region spanning 1 to 217 (MEIKVLEKGF…PVTYEAFLNF (217 aa)) is the ThyX domain. FAD is bound by residues serine 55, 78–80 (RHR), and glutamate 86. DUMP-binding positions include 75-78 (QLVR), 86-90 (ERSGR), and arginine 156. Positions 78–88 (RHRIASINERS) match the ThyX motif motif. Residues 172–174 (NAR) and asparagine 178 each bind FAD. DUMP is bound at residue arginine 183. Arginine 183 acts as the Involved in ionization of N3 of dUMP, leading to its activation in catalysis.

It belongs to the thymidylate synthase ThyX family. As to quaternary structure, homotetramer. Requires FAD as cofactor.

It catalyses the reaction dUMP + (6R)-5,10-methylene-5,6,7,8-tetrahydrofolate + NADPH + H(+) = dTMP + (6S)-5,6,7,8-tetrahydrofolate + NADP(+). The protein operates within pyrimidine metabolism; dTTP biosynthesis. Functionally, catalyzes the reductive methylation of 2'-deoxyuridine-5'-monophosphate (dUMP) to 2'-deoxythymidine-5'-monophosphate (dTMP) while utilizing 5,10-methylenetetrahydrofolate (mTHF) as the methyl donor, and NADPH and FADH(2) as the reductant. This chain is Flavin-dependent thymidylate synthase, found in Kosmotoga olearia (strain ATCC BAA-1733 / DSM 21960 / TBF 19.5.1).